Here is a 439-residue protein sequence, read N- to C-terminus: Serine hydroxymethyltransferase (439 aa).

(6S)-5,6,7,8-tetrahydrofolate is bound at residue alanine 126–valine 128. Lysine 232 carries the post-translational modification N6-(pyridoxal phosphate)lysine.

The protein belongs to the SHMT family. In terms of assembly, homodimer. Pyridoxal 5'-phosphate serves as cofactor.

The protein localises to the cytoplasm. The protein operates within amino-acid biosynthesis; glycine biosynthesis; glycine from L-serine: step 1/1. Catalyzes the reversible interconversion of serine and glycine with a modified folate serving as the one-carbon carrier. Also exhibits a pteridine-independent aldolase activity toward beta-hydroxyamino acids, producing glycine and aldehydes, via a retro-aldol mechanism. The sequence is that of Serine hydroxymethyltransferase from Staphylothermus marinus (strain ATCC 43588 / DSM 3639 / JCM 9404 / F1).